Reading from the N-terminus, the 1976-residue chain is Myosin-10 (1976 aa).

Position 18 is an omega-N-methylarginine (arginine 18). The Myosin N-terminal SH3-like domain maps to 31-81 (TAKKLVWIPSERHGFEAASIKEERGDEVMVELAENGKKAMVNKDDIQKMNP). Residues 85 to 783 (SKVEDMAELT…VLAHLEEERD (699 aa)) enclose the Myosin motor domain. 178–185 (GESGAGKT) contacts ATP. N6-acetyllysine is present on lysine 442. Positions 661-683 (LTKLMATLRNTNPNFVRCIIPNH) are actin-binding. Positions 786–815 (ITDIIIFFQAVCRGYLARKAFAKKQQQLSA) constitute an IQ domain. A coiled-coil region spans residues 845–1976 (LQVTRQEEEL…VNETQPPQSE (1132 aa)). Positions 1125–1175 (EDFESEKASRNKAEKQKRDLSEELEALKTELEDTLDTTAAQQELRTKREQE) are disordered. Residues 1129 to 1155 (SEKASRNKAEKQKRDLSEELEALKTEL) are compositionally biased toward basic and acidic residues. Serine 1145 bears the Phosphoserine mark. An N6-acetyllysine mark is found at lysine 1241, lysine 1301, and lysine 1645. 2 disordered regions span residues 1697–1718 (ASSE…DEIA) and 1874–1976 (KANA…PQSE). Residues 1698–1708 (SSERARRHAEQ) show a composition bias toward basic and acidic residues. Arginine 1930 is subject to Omega-N-methylarginine. Serine 1935, serine 1937, serine 1938, and serine 1939 each carry phosphoserine. Omega-N-methylarginine is present on arginine 1940. Serine 1952 and serine 1956 each carry phosphoserine. Threonine 1960 bears the Phosphothreonine mark. Over residues 1967–1976 (VNETQPPQSE) the composition is skewed to polar residues. At serine 1975 the chain carries Phosphoserine.

Belongs to the TRAFAC class myosin-kinesin ATPase superfamily. Myosin family. In terms of assembly, myosin is a hexameric protein that consists of 2 heavy chain subunits (MHC), 2 alkali light chain subunits (MLC) and 2 regulatory light chain subunits (MLC-2). Interacts with PLEKHG6. Interacts with ECPAS. Interacts with KIF26B. Interacts with LARP6. Interacts with MCC. Interacts with CFAP95. In terms of processing, phosphorylated by ABL2.

Its subcellular location is the cell projection. The protein localises to the lamellipodium. Involved with LARP6 in the stabilization of type I collagen mRNAs for CO1A1 and CO1A2. During cell spreading, plays an important role in cytoskeleton reorganization, focal contacts formation (in the central part but not the margins of spreading cells), and lamellipodial extension; this function is mechanically antagonized by MYH9. Cellular myosin that appears to play a role in cytokinesis, cell shape, and specialized functions such as secretion and capping. This is Myosin-10 (Myh10) from Rattus norvegicus (Rat).